The chain runs to 74 residues: Protein SMIM7 homolog (74 aa).

A helical transmembrane segment spans residues 53–73 (FRAFIGLWNIFIMFLMLVFFG).

This sequence belongs to the SMIM7 family.

It is found in the membrane. This chain is Protein SMIM7 homolog, found in Ixodes scapularis (Black-legged tick).